The chain runs to 478 residues: Shikimate biosynthesis protein AroDE (478 aa).

The interval 1-208 (MLCTTISGPS…LKHHYFYNFA (208 aa)) is 3-dehydroquinate dehydratase. 3-dehydroquinate is bound by residues serine 21, 29-31 (EMR), and 55-57 (AWK). The active-site Proton donor/acceptor; for 3-dehydroquinate dehydratase activity is the histidine 110. Lysine 133 serves as the catalytic Schiff-base intermediate with substrate; for 3-dehydroquinate dehydratase activity. 3-dehydroquinate is bound by residues arginine 171 and glutamine 196. The interval 209 to 478 (SLSAQSPICA…VLASLFSIAP (270 aa)) is shikimate 5-dehydrogenase. Residue 226–228 (SIG) participates in shikimate binding. Residue lysine 277 is the Proton acceptor; for shikimate dehydrogenase activity of the active site. Shikimate is bound by residues asparagine 298 and aspartate 313. Residues 337 to 341 (GAGGA), 360 to 362 (NRT), and glycine 435 contribute to the NADP(+) site. Residue glutamine 442 coordinates shikimate.

This sequence in the N-terminal section; belongs to the type-I 3-dehydroquinase family. It in the C-terminal section; belongs to the shikimate dehydrogenase family.

It carries out the reaction 3-dehydroquinate = 3-dehydroshikimate + H2O. It catalyses the reaction shikimate + NADP(+) = 3-dehydroshikimate + NADPH + H(+). The protein operates within metabolic intermediate biosynthesis; chorismate biosynthesis; chorismate from D-erythrose 4-phosphate and phosphoenolpyruvate: step 3/7. It functions in the pathway metabolic intermediate biosynthesis; chorismate biosynthesis; chorismate from D-erythrose 4-phosphate and phosphoenolpyruvate: step 4/7. In terms of biological role, bifunctional enzyme that catalyzes two sequential steps of the aromatic amino acids biosynthetic pathway. In the first reaction, the AroD domain catalyzes the cis-dehydration of 3-dehydroquinate (DHQ) and introduces the first double bond of the aromatic ring to yield 3-dehydroshikimate; in the second reaction, the AroE domain catalyzes the reversible NADPH linked reduction of 3-dehydroshikimate (DHSA) to yield shikimate (SA). The polypeptide is Shikimate biosynthesis protein AroDE (Chlamydia trachomatis serovar D (strain ATCC VR-885 / DSM 19411 / UW-3/Cx)).